The chain runs to 434 residues: Histidinol dehydrogenase (434 aa).

NAD(+) contacts are provided by Y130, Q188, and N211. Substrate is bound by residues S237, Q259, and H262. Residues Q259 and H262 each contribute to the Zn(2+) site. Active-site proton acceptor residues include E326 and H327. Residues H327, D360, E414, and H419 each coordinate substrate. A Zn(2+)-binding site is contributed by D360. H419 is a binding site for Zn(2+).

This sequence belongs to the histidinol dehydrogenase family. As to quaternary structure, homodimer. Zn(2+) serves as cofactor.

The catalysed reaction is L-histidinol + 2 NAD(+) + H2O = L-histidine + 2 NADH + 3 H(+). Its pathway is amino-acid biosynthesis; L-histidine biosynthesis; L-histidine from 5-phospho-alpha-D-ribose 1-diphosphate: step 9/9. Functionally, catalyzes the sequential NAD-dependent oxidations of L-histidinol to L-histidinaldehyde and then to L-histidine. The polypeptide is Histidinol dehydrogenase (Shigella dysenteriae serotype 1 (strain Sd197)).